Consider the following 636-residue polypeptide: DNA-directed RNA polymerase III subunit RPC3 (636 aa).

The interval 366–385 (SMQRRSQERSTHQGQSHKRL) is disordered. The tract at residues 563-584 (LAWNIANSIHKTEILKEENFTL) is leucine-zipper.

It belongs to the RNA polymerase beta chain family. In terms of assembly, component of the RNA polymerase III (Pol III) complex consisting of 17 subunits.

The protein localises to the nucleus. Functionally, DNA-dependent RNA polymerase catalyzes the transcription of DNA into RNA using the four ribonucleoside triphosphates as substrates. Specific core component of RNA polymerase III which synthesizes small RNAs, such as 5S rRNA and tRNAs. This chain is DNA-directed RNA polymerase III subunit RPC3 (RPC82), found in Eremothecium gossypii (strain ATCC 10895 / CBS 109.51 / FGSC 9923 / NRRL Y-1056) (Yeast).